Here is a 109-residue protein sequence, read N- to C-terminus: Ribonuclease (109 aa).

The active-site Proton acceptor is the glutamate 72. Histidine 101 functions as the Proton donor in the catalytic mechanism.

The protein belongs to the ribonuclease N1/T1 family.

It localises to the secreted. Hydrolyzes phosphodiester bonds in RNA, poly- and oligoribonucleotides resulting in 3'-nucleoside monophosphates via 2',3'-cyclophosphate intermediates. The sequence is that of Ribonuclease from Heyndrickxia coagulans (Weizmannia coagulans).